Consider the following 239-residue polypeptide: Diablo IAP-binding mitochondrial protein (239 aa).

A mitochondrion-targeting transit peptide spans 1-22; that stretch reads MAVLKSWLSRSVTLLFRYRQCL. Residues 56–60 carry the IAP-binding motif; sequence AVPIA. The disordered stretch occupies residues 217 to 239; that stretch reads RQKTQEEGEERAESEQEAYLRED.

Belongs to the Smac/DIABLO protein family. In terms of assembly, homodimer. Interacts with BEX3. Interacts with BIRC2/c-IAP1 (via BIR3 domain). Interacts with BIRC6/BRUCE. Interacts with BIRC7/livin. Interacts with XIAP/BIRC4 (via BIR3 domain). Interacts with the monomeric and dimeric form of BIRC5/survivin. Interacts with AREL1 (via HECT domain); in the cytoplasm following induction of apoptosis. Post-translationally, ubiquitinated by BIRC7/livin. Ubiquitinated by BIRC6. In terms of processing, the precursor form is proteolytically cleaved by mitochondrial processing peptidase MPP to remove the transit peptide and produce an intermediate form. This is then processed by PARL to produce the mature cleaved form which is released from mitochondria into the cytosol in apoptotic cells.

Its subcellular location is the mitochondrion. It localises to the cytoplasm. The protein resides in the cytosol. Functionally, promotes apoptosis by activating caspases in the cytochrome c/Apaf-1/caspase-9 pathway. Acts by opposing the inhibitory activity of inhibitor of apoptosis proteins (IAP). Inhibits the activity of BIRC6/BRUCE by inhibiting its binding to caspases. In Pongo abelii (Sumatran orangutan), this protein is Diablo IAP-binding mitochondrial protein.